We begin with the raw amino-acid sequence, 234 residues long: Multicopy suppressor of SEC21 protein 28 (234 aa).

Residues 1-47 (MQTPPESTDVKLDTLNEPSAHLIEKNVALPKDIFRSYLSYWIYEIAR) are Cytoplasmic-facing. A Phosphothreonine modification is found at Thr-3. The helical transmembrane segment at 48 to 68 (YTPVMILSLVIGVLVLLIIFF) threads the bilayer. At 69 to 72 (NDNE) the chain is on the extracellular side. A helical transmembrane segment spans residues 73-93 (ACVFNSAIFAFTSLVGLLIIL). Residues 94-234 (SDGNPKLVSR…NIDALLKKTE (141 aa)) are Cytoplasmic-facing. The interval 231–234 (KKTE) is COPI binding.

It belongs to the DUP/COS family. Interacts with MST27. Binds to coatomer proteins of COPI and SEC23/SEC24 of COPII coated vesicles.

Its subcellular location is the endoplasmic reticulum. The protein resides in the golgi apparatus. It localises to the cytoplasmic vesicle. It is found in the COPI-coated vesicle membrane. The protein localises to the COPII-coated vesicle membrane. Its function is as follows. Involved in protein trafficking vesicle formation, probably by stabilizing of coatomer at the Golgi membrane and thus allowing the efficient formation of COPI coated vesicles. The protein is Multicopy suppressor of SEC21 protein 28 (MST28) of Saccharomyces cerevisiae (strain ATCC 204508 / S288c) (Baker's yeast).